The sequence spans 185 residues: Vomeronasal secretory protein 2 (185 aa).

A signal peptide spans 1–19 (MKSLLLTVTLSSLVATLQT). An intrachain disulfide couples Cys-80 to Cys-172.

Belongs to the calycin superfamily. Lipocalin family. As to expression, specifically expressed in vomeronasal and posterior glands of the nasal septum, the ducts of which open into the lumen of the vomeronasal organ.

Its subcellular location is the secreted. In terms of biological role, transport of lipophilic molecules, possible pheromone-carrier. This Mus musculus (Mouse) protein is Vomeronasal secretory protein 2 (Lcn4).